Here is a 168-residue protein sequence, read N- to C-terminus: Microtubule-associated protein Jupiter (168 aa).

The span at 1–14 (MISNFDCTDNQASS) shows a compositional bias: polar residues. The disordered stretch occupies residues 1–33 (MISNFDCTDNQASSKVLRPPGGGSSDIFGSEMP). Phosphoserine is present on Ser-24. Thr-35 is subject to Phosphothreonine. The segment covering 76–87 (RGQKTVDSHSRL) has biased composition (basic and acidic residues). Disordered regions lie at residues 76–106 (RGQK…KSSI) and 124–168 (NGHY…GAGK). Thr-92 and Thr-96 each carry phosphothreonine. Residues Ser-105, Ser-133, and Ser-144 each carry the phosphoserine modification. Low complexity predominate over residues 131–144 (SGSVSSASSSVSSS). A compositionally biased stretch (polar residues) spans 145–155 (TENLKMNSGSR).

It belongs to the MAP Jupiter family.

It localises to the nucleus. Its subcellular location is the cytoplasm. The protein resides in the cytoskeleton. The protein localises to the spindle. Its function is as follows. Binds to all microtubule populations. This is Microtubule-associated protein Jupiter from Drosophila simulans (Fruit fly).